A 199-amino-acid polypeptide reads, in one-letter code: Cytochrome c-type cyt cy (199 aa).

The chain crosses the membrane as a helical span at residues 7 to 27; the sequence is ITKIGVTLFAVALFYGFIYML. The span at 69-80 shows a compositional bias: low complexity; sequence AAETAEAAAPAE. Residues 69-93 form a disordered region; it reads AAETAEAAAPAEPAAPPPPAYVEVD. 4 residues coordinate heme c: C112, C115, H116, and M148.

Post-translationally, binds 1 heme c group covalently per subunit.

The protein localises to the cell membrane. Functionally, electron transfer pathways that operates during photosynthesis. This chain is Cytochrome c-type cyt cy (cycY), found in Rhodobacter capsulatus (strain ATCC BAA-309 / NBRC 16581 / SB1003).